The sequence spans 500 residues: Putative (R)-citramalate synthase CimA (500 aa).

The Pyruvate carboxyltransferase domain occupies 9–258 (LRFFDTTLRD…DTRIRTERLY (250 aa)).

It belongs to the alpha-IPM synthase/homocitrate synthase family. Homodimer.

The catalysed reaction is pyruvate + acetyl-CoA + H2O = (3R)-citramalate + CoA + H(+). The protein operates within amino-acid biosynthesis; L-isoleucine biosynthesis; 2-oxobutanoate from pyruvate: step 1/3. Functionally, catalyzes the condensation of pyruvate and acetyl-coenzyme A to form (R)-citramalate. The polypeptide is Putative (R)-citramalate synthase CimA (Methanosphaerula palustris (strain ATCC BAA-1556 / DSM 19958 / E1-9c)).